A 397-amino-acid chain; its full sequence is DNA-binding protein (397 aa).

Residues C116 and H118 each contribute to the Zn(2+) site. The flexible loop stretch occupies residues 129–161; the sequence is IEMAATSESGVAALKEGRGAVEINRWGRQVVKI. Zn(2+)-binding residues include C169, C185, C225, C227, C276, and C289. Positions 335–397 are C-terminal arm, DBP binding; sequence ALLPEGSVNE…IVLESSEEDE (63 aa). A disordered region spans residues 338–397; the sequence is PEGSVNEDENPFGLDNSEDEEEVVPPSPPSPARKRTRTTVAEVHHKKKKKIVLESSEEDE. The span at 342–360 shows a compositional bias: acidic residues; that stretch reads VNEDENPFGLDNSEDEEEV.

This sequence belongs to the adenoviridae E2A DNA-binding protein family. Homomultimerizes on viral ssDNA bound to pTP. Forms a initiation complex with viral polymerase, pTP and hosts NFIA and POU2F1/OCT1. Interacts with host SRCAP.

It localises to the host nucleus. Its function is as follows. Plays a role in the elongation phase of viral strand displacement replication by unwinding the template in an ATP-independent fashion, employing its capacity to form multimers. Also enhances the rate of initiation. Released from template upon second strand synthesis. Assembles in complex with viral pTP, viral pol, host NFIA and host POU2F1/OCT1 on viral origin of replication. Covers the whole ssDNA genome during synthesis. The complementary strand synthesis induces its relese from DNA template. May inhibit cellular transcription mediated by the interaction between host SRCAP and CBP. The sequence is that of DNA-binding protein from Snake adenovirus serotype 1 (SnAdV-1).